The sequence spans 196 residues: DnaA initiator-associating protein DiaA (196 aa).

Residues 34 to 196 form the SIS domain; the sequence is LVQSLLNGNK…DNTLFPHQDD (163 aa).

The protein belongs to the SIS family. DiaA subfamily. As to quaternary structure, homotetramer; dimer of dimers.

Its function is as follows. Required for the timely initiation of chromosomal replication via direct interactions with the DnaA initiator protein. The chain is DnaA initiator-associating protein DiaA from Shigella boydii serotype 18 (strain CDC 3083-94 / BS512).